The chain runs to 59 residues: Phycobilisome degradation protein NblA (59 aa).

To chloroplast ycf18.

Involved in phycobilisome (PBS) degradation during nutrient deprivation. May mark the PBS for degradation by covalent association with PBS components or may disrupt the PBS via ionic interactions. The polypeptide is Phycobilisome degradation protein NblA (Synechococcus elongatus (strain ATCC 33912 / PCC 7942 / FACHB-805) (Anacystis nidulans R2)).